The chain runs to 109 residues: Cell division protein ZapA (109 aa).

A coiled-coil region spans residues 21–97 (PEQRDALSQA…QTIEQALLDQ (77 aa)).

It belongs to the ZapA family. Type 1 subfamily. Homodimer. Interacts with FtsZ.

Its subcellular location is the cytoplasm. Activator of cell division through the inhibition of FtsZ GTPase activity, therefore promoting FtsZ assembly into bundles of protofilaments necessary for the formation of the division Z ring. It is recruited early at mid-cell but it is not essential for cell division. The protein is Cell division protein ZapA of Enterobacter sp. (strain 638).